The following is a 417-amino-acid chain: NADH-quinone oxidoreductase subunit D (417 aa).

It belongs to the complex I 49 kDa subunit family. In terms of assembly, NDH-1 is composed of 14 different subunits. Subunits NuoB, C, D, E, F, and G constitute the peripheral sector of the complex.

The protein localises to the cell inner membrane. It catalyses the reaction a quinone + NADH + 5 H(+)(in) = a quinol + NAD(+) + 4 H(+)(out). Functionally, NDH-1 shuttles electrons from NADH, via FMN and iron-sulfur (Fe-S) centers, to quinones in the respiratory chain. The immediate electron acceptor for the enzyme in this species is believed to be ubiquinone. Couples the redox reaction to proton translocation (for every two electrons transferred, four hydrogen ions are translocated across the cytoplasmic membrane), and thus conserves the redox energy in a proton gradient. The chain is NADH-quinone oxidoreductase subunit D from Francisella tularensis subsp. tularensis (strain FSC 198).